The primary structure comprises 514 residues: Type-2 serine--tRNA ligase (514 aa).

Ala313 lines the L-serine pocket. Residue Cys315 coordinates Zn(2+). Arg344 contacts L-serine. ATP-binding positions include 344-346 (RWE) and 355-356 (RV). 361–363 (RGE) contributes to the L-serine binding site. Positions 363 and 470 each coordinate Zn(2+). Arg477 is an ATP binding site.

Belongs to the class-II aminoacyl-tRNA synthetase family. Type-2 seryl-tRNA synthetase subfamily. As to quaternary structure, homodimer. Zn(2+) serves as cofactor.

It localises to the cytoplasm. It carries out the reaction tRNA(Ser) + L-serine + ATP = L-seryl-tRNA(Ser) + AMP + diphosphate + H(+). It catalyses the reaction tRNA(Sec) + L-serine + ATP = L-seryl-tRNA(Sec) + AMP + diphosphate + H(+). Its pathway is aminoacyl-tRNA biosynthesis; selenocysteinyl-tRNA(Sec) biosynthesis; L-seryl-tRNA(Sec) from L-serine and tRNA(Sec): step 1/1. Functionally, catalyzes the attachment of serine to tRNA(Ser). Is also able to aminoacylate tRNA(Sec) with serine, to form the misacylated tRNA L-seryl-tRNA(Sec), which will be further converted into selenocysteinyl-tRNA(Sec). The sequence is that of Type-2 serine--tRNA ligase from Methanococcus maripaludis (strain C5 / ATCC BAA-1333).